Here is a 364-residue protein sequence, read N- to C-terminus: tRNA N6-adenosine threonylcarbamoyltransferase (364 aa).

Fe cation is bound by residues histidine 115 and histidine 119. Substrate contacts are provided by residues 137–141, aspartate 170, glycine 183, and asparagine 288; that span reads LVSGG. Aspartate 316 is a binding site for Fe cation. The tract at residues 341–364 is disordered; the sequence is PRSRWPLDEKSAPLIGTGRRGTKA.

The protein belongs to the KAE1 / TsaD family. The cofactor is Fe(2+).

Its subcellular location is the cytoplasm. It carries out the reaction L-threonylcarbamoyladenylate + adenosine(37) in tRNA = N(6)-L-threonylcarbamoyladenosine(37) in tRNA + AMP + H(+). Required for the formation of a threonylcarbamoyl group on adenosine at position 37 (t(6)A37) in tRNAs that read codons beginning with adenine. Is involved in the transfer of the threonylcarbamoyl moiety of threonylcarbamoyl-AMP (TC-AMP) to the N6 group of A37, together with TsaE and TsaB. TsaD likely plays a direct catalytic role in this reaction. The sequence is that of tRNA N6-adenosine threonylcarbamoyltransferase from Bartonella henselae (strain ATCC 49882 / DSM 28221 / CCUG 30454 / Houston 1) (Rochalimaea henselae).